The chain runs to 818 residues: Serine/threonine-protein kinase PTK2/STK2 (818 aa).

Positions 28–39 (NSSSHTDNSSLL) are enriched in polar residues. Disordered stretches follow at residues 28 to 100 (NSSS…GSVS) and 117 to 177 (NPYL…SHHF). Thr56 is subject to Phosphothreonine. A compositionally biased stretch (low complexity) spans 57 to 81 (SPSISGSGSGGNSPSSSAGARQRSA). Ser59 and Ser80 each carry phosphoserine. The span at 136–160 (TRDRDRAVLDREKEKERARNKERNT) shows a compositional bias: basic and acidic residues. Residues 255–562 (DTDNKPIGSG…MDDLFNDPFF (308 aa)) form the Protein kinase domain. ATP-binding positions include 261–269 (IGSGGSSEV) and Lys285. The Proton acceptor role is filled by Asp388. Over residues 585–595 (STSTNDFSENS) the composition is skewed to polar residues. The interval 585-795 (STSTNDFSEN…SVSSSKKKKV (211 aa)) is disordered. A phosphoserine mark is found at Ser623 and Ser632. Composition is skewed to basic and acidic residues over residues 638 to 651 (KVKD…HDVG) and 659 to 685 (TKPK…KVIE). Ser694 is modified (phosphoserine). Phosphothreonine is present on Thr700. At Ser711 the chain carries Phosphoserine. The span at 727–736 (TPTTPTHNGP) shows a compositional bias: low complexity. At Thr737 the chain carries Phosphothreonine. A phosphoserine mark is found at Ser752, Ser755, Ser778, and Ser781. A compositionally biased stretch (polar residues) spans 755-767 (SLKSETPASTKNF). Over residues 768 to 789 (SAPNVSSSSNSLRSLGSPSVSS) the composition is skewed to low complexity.

The protein belongs to the protein kinase superfamily. Ser/Thr protein kinase family.

It localises to the nucleus. Its subcellular location is the cytoplasm. It catalyses the reaction L-seryl-[protein] + ATP = O-phospho-L-seryl-[protein] + ADP + H(+). The catalysed reaction is L-threonyl-[protein] + ATP = O-phospho-L-threonyl-[protein] + ADP + H(+). Essential determinant for high-affinity spermidine transport. Required for the activation of the plasma membrane proton pump PMA1 via phosphorylation of 'Ser-899'. The protein is Serine/threonine-protein kinase PTK2/STK2 (PTK2) of Saccharomyces cerevisiae (strain ATCC 204508 / S288c) (Baker's yeast).